The primary structure comprises 174 residues: Co-chaperone protein HscB (174 aa).

Residues 2–74 (NYFTLFDLPR…LNRAIYFLCL (73 aa)) form the J domain.

This sequence belongs to the HscB family. Interacts with HscA and stimulates its ATPase activity. Interacts with IscU.

Co-chaperone involved in the maturation of iron-sulfur cluster-containing proteins. Seems to help targeting proteins to be folded toward HscA. The polypeptide is Co-chaperone protein HscB (Buchnera aphidicola subsp. Acyrthosiphon pisum (strain Tuc7)).